We begin with the raw amino-acid sequence, 2609 residues long: Beige protein homolog 1 (2609 aa).

2 disordered regions span residues 1654–1679 (DSKLEARSSGARRNRSFDTSVEAPVS) and 1691–1729 (ILPSQEETLHDAARSDSNNSMEDEEDDVDEEDKEDKNRT). Residues 1711–1723 (MEDEEDDVDEEDK) show a composition bias toward acidic residues. The BEACH-type PH domain maps to 1735 to 1870 (ESGDSIQDVY…NRDSLYQKLV (136 aa)). The 296-residue stretch at 1907-2202 (ANALSFSTTH…QVFKKPHPQR (296 aa)) folds into the BEACH domain. WD repeat units lie at residues 2249–2290 (KDEV…QPVM), 2294–2332 (LHSEKITHVVACDERTFLTASLDLTLRLWTLSTNKPIKA), 2340–2379 (GHRYRITCVTVCKAFSIIVSGDAGGNLIIWDLNRAEFVSS), 2429–2475 (NSDE…NAKL), and 2507–2546 (ATRQNIITITPNGQARGIFAGDDKGQVFSWMLPDTTSNVH). The FYVE-type zinc-finger motif lies at 2550 to 2604 (DNTSELCSLCDSRFSLMEWRSQCRACGNSNVCSDCVSMLKDTNIKTCYECYRQMP).

It is found in the cytoplasm. The protein localises to the membrane. Functionally, may be involved in protein sorting and cell wall formation. The chain is Beige protein homolog 1 (lvs1) from Schizosaccharomyces pombe (strain 972 / ATCC 24843) (Fission yeast).